We begin with the raw amino-acid sequence, 34 residues long: Photosystem II reaction center protein M (34 aa).

A helical membrane pass occupies residues 7-27 (GFVASLLFILVPAIFLIVLYI).

The protein belongs to the PsbM family. In terms of assembly, PSII is composed of 1 copy each of membrane proteins PsbA, PsbB, PsbC, PsbD, PsbE, PsbF, PsbH, PsbI, PsbJ, PsbK, PsbL, PsbM, PsbT, PsbX, PsbY, PsbZ, Psb30/Ycf12, peripheral proteins PsbO, CyanoQ (PsbQ), PsbU, PsbV and a large number of cofactors. It forms dimeric complexes.

It is found in the cellular thylakoid membrane. One of the components of the core complex of photosystem II (PSII). PSII is a light-driven water:plastoquinone oxidoreductase that uses light energy to abstract electrons from H(2)O, generating O(2) and a proton gradient subsequently used for ATP formation. It consists of a core antenna complex that captures photons, and an electron transfer chain that converts photonic excitation into a charge separation. This subunit is found at the monomer-monomer interface. The sequence is that of Photosystem II reaction center protein M from Parasynechococcus marenigrum (strain WH8102).